The primary structure comprises 348 residues: Lysophosphatidic acid receptor 2 (348 aa).

At 1–30 (MGHCYYNETIGFFYNNSGKELSSHWRPKDV) the chain is on the extracellular side. N-linked (GlcNAc...) asparagine glycans are attached at residues N7 and N15. Residues 31–51 (VVVALGLTVSVLVLLTNLLVI) form a helical membrane-spanning segment. Topologically, residues 52-66 (AAIASNRRFHQPIYY) are cytoplasmic. A helical membrane pass occupies residues 67–87 (LLGNLAAADLFAGVAYLFLMF). Residues 88–104 (HTGPRTARLSLEGWFLR) are Extracellular-facing. The helical transmembrane segment at 105-124 (QGLLDTSLTASVATLLAIAV) threads the bilayer. Residues 125–143 (ERRRSVMAVQLHSRLPRGR) lie on the Cytoplasmic side of the membrane. The chain crosses the membrane as a helical span at residues 144-164 (VVMLIVGVWVAALGLGLLPAH). The Extracellular portion of the chain corresponds to 165-185 (SWHCLCALDRCSRMAPLLSRS). A helical membrane pass occupies residues 186-206 (YLAVWALSSLLVFLLMVAVYT). Over 207-239 (RIFFYVRRRVQRMAEHVSCHPRYRETTLSLVKT) the chain is Cytoplasmic. A helical transmembrane segment spans residues 240 to 260 (VVIILGAFVVCWTPGQVVLLL). Topologically, residues 261 to 276 (DGLGCKSCNVLAVEKY) are extracellular. The helical transmembrane segment at 277–294 (FLLLAEANSLVNAAVYSC) threads the bilayer. At 295-348 (RDAEMRRTFRRLLCCACLRRSTRESAHYTSSAQGGASTRIMLPENGHPLMDSTL) the chain is on the cytoplasmic side. A lipid anchor (S-palmitoyl cysteine) is attached at C308. The PDZ-binding signature appears at 345 to 348 (DSTL).

It belongs to the G-protein coupled receptor 1 family. Interacts with SLC9A3R2/NHERF2, MAGI3 and PLCB3. Interacts with RALA and GRK2.

The protein localises to the cell surface. It is found in the cell membrane. Functionally, receptor for lysophosphatidic acid (LPA), a mediator of diverse cellular activities. Seems to be coupled to the G(i)/G(o), G(12)/G(13), and G(q) families of heteromeric G proteins. Plays a key role in phospholipase C-beta (PLC-beta) signaling pathway. Stimulates phospholipase C (PLC) activity in a manner that is independent of RALA activation. The protein is Lysophosphatidic acid receptor 2 of Macaca fascicularis (Crab-eating macaque).